We begin with the raw amino-acid sequence, 344 residues long: KRR1 small subunit processome component homolog (344 aa).

The KH domain occupies 125–193 (DIIKIGNLVH…VRDIVLETMN (69 aa)). Basic residues predominate over residues 232–245 (NISKRKQPKVKKQK). Disordered stretches follow at residues 232–260 (NISK…ESKV) and 273–326 (QEQK…TKVD). Residues 270-295 (FLNQEQKQAKRNQGRTEKQKEAAKRQ) adopt a coiled-coil conformation. Composition is skewed to basic and acidic residues over residues 283–302 (GRTE…RNKD) and 315–326 (RKKEDGSSTKVD).

The protein belongs to the KRR1 family. Monomer. Component of the ribosomal small subunit (SSU) processome.

The protein resides in the nucleus. It is found in the nucleolus. Functionally, required for 40S ribosome biogenesis. Involved in nucleolar processing of pre-18S ribosomal RNA and ribosome assembly. Binds to RNA. Required for female germline development, cell viability during eye development and for survival of dividing cells and epithelial cells during early wing disk development. In Drosophila yakuba (Fruit fly), this protein is KRR1 small subunit processome component homolog.